Here is a 622-residue protein sequence, read N- to C-terminus: 1-deoxy-D-xylulose-5-phosphate synthase (622 aa).

Residues H71 and 112–114 (GHS) each bind thiamine diphosphate. D143 contributes to the Mg(2+) binding site. Thiamine diphosphate contacts are provided by residues 144–145 (GA), N172, Y283, and E363. N172 contacts Mg(2+).

The protein belongs to the transketolase family. DXPS subfamily. As to quaternary structure, homodimer. The cofactor is Mg(2+). Thiamine diphosphate serves as cofactor.

It carries out the reaction D-glyceraldehyde 3-phosphate + pyruvate + H(+) = 1-deoxy-D-xylulose 5-phosphate + CO2. Its pathway is metabolic intermediate biosynthesis; 1-deoxy-D-xylulose 5-phosphate biosynthesis; 1-deoxy-D-xylulose 5-phosphate from D-glyceraldehyde 3-phosphate and pyruvate: step 1/1. In terms of biological role, catalyzes the acyloin condensation reaction between C atoms 2 and 3 of pyruvate and glyceraldehyde 3-phosphate to yield 1-deoxy-D-xylulose-5-phosphate (DXP). In Caldanaerobacter subterraneus subsp. tengcongensis (strain DSM 15242 / JCM 11007 / NBRC 100824 / MB4) (Thermoanaerobacter tengcongensis), this protein is 1-deoxy-D-xylulose-5-phosphate synthase.